We begin with the raw amino-acid sequence, 291 residues long: 4-hydroxy-tetrahydrodipicolinate synthase (291 aa).

Pyruvate is bound at residue Thr-44. Tyr-132 acts as the Proton donor/acceptor in catalysis. The Schiff-base intermediate with substrate role is filled by Lys-160. Pyruvate is bound at residue Ile-202.

It belongs to the DapA family. In terms of assembly, homotetramer; dimer of dimers.

Its subcellular location is the cytoplasm. It catalyses the reaction L-aspartate 4-semialdehyde + pyruvate = (2S,4S)-4-hydroxy-2,3,4,5-tetrahydrodipicolinate + H2O + H(+). Its pathway is amino-acid biosynthesis; L-lysine biosynthesis via DAP pathway; (S)-tetrahydrodipicolinate from L-aspartate: step 3/4. Its function is as follows. Catalyzes the condensation of (S)-aspartate-beta-semialdehyde [(S)-ASA] and pyruvate to 4-hydroxy-tetrahydrodipicolinate (HTPA). This Syntrophobacter fumaroxidans (strain DSM 10017 / MPOB) protein is 4-hydroxy-tetrahydrodipicolinate synthase.